A 122-amino-acid chain; its full sequence is Large ribosomal subunit protein uL14 (122 aa).

Belongs to the universal ribosomal protein uL14 family. Part of the 50S ribosomal subunit. Forms a cluster with proteins L3 and L19. In the 70S ribosome, L14 and L19 interact and together make contacts with the 16S rRNA in bridges B5 and B8.

Its function is as follows. Binds to 23S rRNA. Forms part of two intersubunit bridges in the 70S ribosome. This is Large ribosomal subunit protein uL14 from Chloroherpeton thalassium (strain ATCC 35110 / GB-78).